The sequence spans 157 residues: Ribosomal RNA large subunit methyltransferase H (157 aa).

Residues leucine 75, glycine 106, and 125 to 130 contribute to the S-adenosyl-L-methionine site; that span reads FSELTF.

Belongs to the RNA methyltransferase RlmH family. Homodimer.

The protein localises to the cytoplasm. The enzyme catalyses pseudouridine(1915) in 23S rRNA + S-adenosyl-L-methionine = N(3)-methylpseudouridine(1915) in 23S rRNA + S-adenosyl-L-homocysteine + H(+). In terms of biological role, specifically methylates the pseudouridine at position 1915 (m3Psi1915) in 23S rRNA. In Malacoplasma penetrans (strain HF-2) (Mycoplasma penetrans), this protein is Ribosomal RNA large subunit methyltransferase H.